The chain runs to 592 residues: Laccase PFICI_06862 (592 aa).

Residues 1 to 19 (MYIQTQFASLLLLAGTSLA) form the signal peptide. N26 carries an N-linked (GlcNAc...) asparagine glycan. Plastocyanin-like domains follow at residues 32 to 142 (QWSS…WIAP) and 173 to 350 (VVIS…RYPG). The Cu cation site is built by H78, H80, H123, and H125. Residues N370, N407, and N454 are each glycosylated (N-linked (GlcNAc...) asparagine). Residues 445–563 (SDVQGGSMQN…AGQQVVLLEG (119 aa)) form the Plastocyanin-like 3 domain. H475 lines the Cu cation pocket. N524 carries N-linked (GlcNAc...) asparagine glycosylation.

Belongs to the multicopper oxidase family.

It is found in the cell surface. The protein operates within pigment biosynthesis; melanin biosynthesis. Its function is as follows. Laccase involved the biosynthesis of dihydroxynaphthalene (DHN)-melanin, a bluish-green pigment forming a dark layer in the conidial wall that protects the conidia from UV radiations. The first step of the pathway is the production of the pentaketide 1,3,6,8-tetrahydroxynaphthalene (1,3,6,8-THN or T4HN) by the polyketide synthase PfmaE though condensation of acetyl-CoA with malonyl-CoA. T4HN is not stable and easily oxidizes into the stable form flaviolin. T4HN is also substrate of the hydroxynaphthalene reductase PfmaG to yield scytalone. The scytalone dehydratase PfmaJ then reduces scytalone to 1,3,8-THN. 1,3,8-THN is then substrate of the hydroxynaphthalene reductase PfmaI to yield vermelone. Vermelone is further converted by the multicopper oxidase PfmaD to 1,8-DHN. Finally the laccase PFICI_06862 transforms 1,8-DHN to DHN-melanin. The roles of the 5-oxoprolinase PfmaA and the proline iminopeptidase PfmaB within the cluster have not been elucidated yet. In Pestalotiopsis fici (strain W106-1 / CGMCC3.15140), this protein is Laccase PFICI_06862.